Here is a 340-residue protein sequence, read N- to C-terminus: MSEKNAYAKSGVDVEAGYEVVERIKKHVARTERAGVMGALGGFGGMFDLSKTGVKEPVLVSGTDGVGTKLMLAIKYDKHDTIGQDCVAMCVNDIIAAGAEPLYFLDYIATGKNNPVKLEEVVSGVAEGCVQAGAALIGGETAEMPGMYGQDDYDLAGFAVGVAEKSQIIDGSKVKEGDILLGLASSGIHSNGYSLVRRVFADYTGKELLPELEGKQLKDVLLEPTRIYVKAALPLIKEELVKGIGHITGGGFIENIPRMFADDLAAEIDEDKVPVLPIFKALEKYGDIKHEEMFEIFNMGVGLMLAVSPENVNRVKELLDEPVYEIGRIIKKADASVVIK.

Belongs to the AIR synthase family.

The protein localises to the cytoplasm. It carries out the reaction 2-formamido-N(1)-(5-O-phospho-beta-D-ribosyl)acetamidine + ATP = 5-amino-1-(5-phospho-beta-D-ribosyl)imidazole + ADP + phosphate + H(+). It functions in the pathway purine metabolism; IMP biosynthesis via de novo pathway; 5-amino-1-(5-phospho-D-ribosyl)imidazole from N(2)-formyl-N(1)-(5-phospho-D-ribosyl)glycinamide: step 2/2. This chain is Phosphoribosylformylglycinamidine cyclo-ligase, found in Streptococcus pyogenes serotype M1.